The following is a 344-amino-acid chain: Small ribosomal subunit biogenesis GTPase RsgA (344 aa).

Positions 100 to 268 (KNELSRPDYY…LIDSPGIREF (169 aa)) constitute a CP-type G domain. Residues 156-159 (NKID) and 210-218 (GQSGVGKSS) each bind GTP. Residues cysteine 292, cysteine 297, histidine 299, and cysteine 305 each coordinate Zn(2+).

It belongs to the TRAFAC class YlqF/YawG GTPase family. RsgA subfamily. As to quaternary structure, monomer. Associates with 30S ribosomal subunit, binds 16S rRNA. Zn(2+) is required as a cofactor.

It localises to the cytoplasm. Its function is as follows. One of several proteins that assist in the late maturation steps of the functional core of the 30S ribosomal subunit. Helps release RbfA from mature subunits. May play a role in the assembly of ribosomal proteins into the subunit. Circularly permuted GTPase that catalyzes slow GTP hydrolysis, GTPase activity is stimulated by the 30S ribosomal subunit. The protein is Small ribosomal subunit biogenesis GTPase RsgA of Actinobacillus pleuropneumoniae serotype 5b (strain L20).